Consider the following 160-residue polypeptide: Transcription elongation factor GreA (160 aa).

Residues 1–72 (MAEKTYVMTL…QIQILETKIR (72 aa)) adopt a coiled-coil conformation.

It belongs to the GreA/GreB family.

Necessary for efficient RNA polymerase transcription elongation past template-encoded arresting sites. The arresting sites in DNA have the property of trapping a certain fraction of elongating RNA polymerases that pass through, resulting in locked ternary complexes. Cleavage of the nascent transcript by cleavage factors such as GreA or GreB allows the resumption of elongation from the new 3'terminus. GreA releases sequences of 2 to 3 nucleotides. In Streptococcus thermophilus (strain CNRZ 1066), this protein is Transcription elongation factor GreA.